The primary structure comprises 602 residues: RecBCD enzyme subunit RecD (602 aa).

174-181 is an ATP binding site; the sequence is GGPGTGKT.

The protein belongs to the RecD family. In terms of assembly, heterotrimer of RecB, RecC and RecD. All subunits contribute to DNA-binding.

It catalyses the reaction Couples ATP hydrolysis with the unwinding of duplex DNA at the replication fork by translocating in the 5'-3' direction. This creates two antiparallel DNA single strands (ssDNA). The leading ssDNA polymer is the template for DNA polymerase III holoenzyme which synthesizes a continuous strand.. It carries out the reaction ATP + H2O = ADP + phosphate + H(+). Functionally, a helicase/nuclease that prepares dsDNA breaks (DSB) for recombinational DNA repair. Binds to DSBs and unwinds DNA via a highly rapid and processive ATP-dependent bidirectional helicase activity. Unwinds dsDNA until it encounters a Chi (crossover hotspot instigator) sequence from the 3' direction. Cuts ssDNA a few nucleotides 3' to the Chi site. The properties and activities of the enzyme are changed at Chi. The Chi-altered holoenzyme produces a long 3'-ssDNA overhang and facilitates RecA-binding to the ssDNA for homologous DNA recombination and repair. Holoenzyme degrades any linearized DNA that is unable to undergo homologous recombination. In the holoenzyme this subunit has ssDNA-dependent ATPase and 5'-3' helicase activity. When added to pre-assembled RecBC greatly stimulates nuclease activity and augments holoenzyme processivity. Negatively regulates the RecA-loading ability of RecBCD. The polypeptide is RecBCD enzyme subunit RecD (Buchnera aphidicola subsp. Schizaphis graminum (strain Sg)).